Reading from the N-terminus, the 856-residue chain is MPRKATTPMMEQYYQIKDQYPDAFLFYRVGDFYELYEDDAIKGSQILELTLTHRSNKSENPIPMAGVPHMAVDSYVNTLVEKGYKVAICEQLEDPKKAKGMVKRGIIQLVTPGTKMAQGPDDSQESNYLTSVVEKAGGYGLAYSDLSTGEIFVTHVKHYAEVVNELLSLRTREVVFAGNLSASDRDRLQKANITVSEPAELEGEHAEISYVQQKLTDSMEKAAVRQLVVYLLATQKRSLAHLQVAESFEIGQYLQMANTVQRNLELTQSATTGRKQGSLFWVLDKTTTAMGGRLLKQWLSRPLLSLDRIKQRQQMVQALLDDYFTRENIVDSLKGVYDLERLSGRVAFGNVNPRELLQLAKSLEATKLIIQTLVESGNPDLEKYGQGIDPQSELAESITNCLVDQPPISAKDGGIIRAGVSEDLDKYREAMNGGKKWLAQMEMEERQRTGIDNLKIGYNRVFGYFIQVSKGNVAKVPQDRYTRKQTLTNADRYITPELKEHENLILEAESRSTDLEYELFSQLREAVKAHIPDLQELGRQLAALDVFVAFAQDAEEKNYCRPSFSSKNEIAVKNGRHPVVGAVLPAGSYIPNDLVMDEDTSIYLITGPNMSGKSTYMRQLALIAIMAQIGSFVPADSAKLPVFDQVFTRIGAADDLYSGKSTFMVEMSEANEALQHASSRSLVLFDEIGRGTATYDGMALAGAIIKYLHDKVGAKTLFATHYHELTELDETLLHLKNIHVGATEENGKLIFLHKILPGPADQSYGIHVAKLAGLPRVVLREASSMLKRLEAEGAREINPSRQQLDLFSPVEVVEENPLKAEQEELLDEISQVNLNEKTPLEVMQLVADWQQALKEE.

Residue 607–614 (GPNMSGKS) coordinates ATP.

The protein belongs to the DNA mismatch repair MutS family.

This protein is involved in the repair of mismatches in DNA. It is possible that it carries out the mismatch recognition step. This protein has a weak ATPase activity. This chain is DNA mismatch repair protein MutS, found in Lactobacillus delbrueckii subsp. bulgaricus (strain ATCC 11842 / DSM 20081 / BCRC 10696 / JCM 1002 / NBRC 13953 / NCIMB 11778 / NCTC 12712 / WDCM 00102 / Lb 14).